The sequence spans 209 residues: Uracil phosphoribosyltransferase (209 aa).

Residues R79, R104, and 131 to 139 each bind 5-phospho-alpha-D-ribose 1-diphosphate; that span reads DPMLATGGS. Uracil contacts are provided by residues I194 and 199–201; that span reads GDA. 5-phospho-alpha-D-ribose 1-diphosphate is bound at residue D200.

It belongs to the UPRTase family. Mg(2+) serves as cofactor.

The enzyme catalyses UMP + diphosphate = 5-phospho-alpha-D-ribose 1-diphosphate + uracil. The protein operates within pyrimidine metabolism; UMP biosynthesis via salvage pathway; UMP from uracil: step 1/1. Allosterically activated by GTP. Its function is as follows. Catalyzes the conversion of uracil and 5-phospho-alpha-D-ribose 1-diphosphate (PRPP) to UMP and diphosphate. In Geobacillus kaustophilus (strain HTA426), this protein is Uracil phosphoribosyltransferase.